We begin with the raw amino-acid sequence, 390 residues long: Chorismate synthase 2 (390 aa).

NADP(+) contacts are provided by Arg-39 and Arg-45. Residues 132–134 (RSS), 253–254 (NA), Gly-298, 313–317 (KPIPT), and Arg-339 contribute to the FMN site.

The protein belongs to the chorismate synthase family. In terms of assembly, homotetramer. FMNH2 serves as cofactor.

The enzyme catalyses 5-O-(1-carboxyvinyl)-3-phosphoshikimate = chorismate + phosphate. It functions in the pathway metabolic intermediate biosynthesis; chorismate biosynthesis; chorismate from D-erythrose 4-phosphate and phosphoenolpyruvate: step 7/7. Catalyzes the anti-1,4-elimination of the C-3 phosphate and the C-6 proR hydrogen from 5-enolpyruvylshikimate-3-phosphate (EPSP) to yield chorismate, which is the branch point compound that serves as the starting substrate for the three terminal pathways of aromatic amino acid biosynthesis. This reaction introduces a second double bond into the aromatic ring system. This Bacillus cereus (strain ATCC 10987 / NRS 248) protein is Chorismate synthase 2.